We begin with the raw amino-acid sequence, 545 residues long: Sulfite oxidase, mitochondrial (545 aa).

Residues 1–79 (MLLLHRAVVL…YQDHRCRAAQ (79 aa)) constitute a mitochondrion transit peptide. Residues 82–161 (THIYTKEEVS…LAQYKIGELN (80 aa)) form the Cytochrome b5 heme-binding domain. Heme b is bound at residue H118. S123 carries the phosphoserine modification. 3 residues coordinate heme b: H143, Q145, and H147. A hinge region spans residues 165–174 (KVAPTVETSD). Residues 175–401 (PYADDPVRHP…YSHWQRRDYK (227 aa)) are moco domain. Residues 215 to 219 (FTRNH), C264, D322, H361, R366, and 377 to 379 (HVK) contribute to the Mo-molybdopterin site. A homodimerization region spans residues 402–538 (GFSPSVDWET…RGVLSNAWHR (137 aa)).

As to quaternary structure, homodimer. The cofactor is heme b. Mo-molybdopterin is required as a cofactor.

It is found in the mitochondrion intermembrane space. The catalysed reaction is sulfite + O2 + H2O = sulfate + H2O2. It functions in the pathway energy metabolism; sulfur metabolism. Catalyzes the oxidation of sulfite to sulfate, the terminal reaction in the oxidative degradation of sulfur-containing amino acids. The chain is Sulfite oxidase, mitochondrial (SUOX) from Homo sapiens (Human).